A 154-amino-acid chain; its full sequence is Histone H2B.5 (154 aa).

A compositionally biased stretch (basic and acidic residues) spans M1–P25. The segment at M1–K62 is disordered. N6-acetyllysine is present on residues K7 and K39. Residue K150 forms a Glycyl lysine isopeptide (Lys-Gly) (interchain with G-Cter in ubiquitin) linkage.

The protein belongs to the histone H2B family. In terms of assembly, the nucleosome is a histone octamer containing two molecules each of H2A, H2B, H3 and H4 assembled in one H3-H4 heterotetramer and two H2A-H2B heterodimers. The octamer wraps approximately 147 bp of DNA. In terms of processing, can be acetylated to form H2BK6ac and H2BK33ac. Post-translationally, monoubiquitinated to form H2BK143ub1; may give a specific tag for epigenetic transcriptional activation.

It localises to the nucleus. It is found in the chromosome. Functionally, core component of nucleosome. Nucleosomes wrap and compact DNA into chromatin, limiting DNA accessibility to the cellular machineries which require DNA as a template. Histones thereby play a central role in transcription regulation, DNA repair, DNA replication and chromosomal stability. DNA accessibility is regulated via a complex set of post-translational modifications of histones, also called histone code, and nucleosome remodeling. In Zea mays (Maize), this protein is Histone H2B.5.